A 411-amino-acid chain; its full sequence is Heterogeneous nuclear ribonucleoprotein 1 (411 aa).

An RRM 1 domain is found at 6–82; sequence GKLFVGGISW…REVDVKRAMS (77 aa). 3 disordered regions span residues 81-103, 183-221, and 358-411; these read MSRE…SSGG, KRAL…DGRM, and AAYG…RQGQ. Polar residues predominate over residues 87 to 101; the sequence is QVSGRTGNLNTSRSS. Residues 110-187 form the RRM 2 domain; sequence KKIFVGGLPP…KQVEVKRALP (78 aa). 3 stretches are compositionally biased toward gly residues: residues 192–212, 362–387, and 397–411; these read PGGG…GYGG, VVGG…GYGD, and GYGG…RQGQ. A nuclear targeting sequence (M9) region spans residues 341–390; it reads GYGYGGYSGSDSGYGNQAAYGVVGGRPSGGGSNNPGSGGYMGGGYGDGSW.

In terms of assembly, component of the spliceosome. Interacts with TRN1.

Its subcellular location is the nucleus. The protein localises to the cytoplasm. Its function is as follows. Involved with pre-mRNA processing. Forms complexes (ribonucleosomes) with at least 20 other different hnRNP and heterogeneous nuclear RNA in the nucleus. Involved in the packaging of pre-mRNA into hnRNP particles, transport of poly(A) mRNA from the nucleus to the cytoplasm and may modulate splice site selection. The sequence is that of Heterogeneous nuclear ribonucleoprotein 1 (RNP1) from Arabidopsis thaliana (Mouse-ear cress).